We begin with the raw amino-acid sequence, 383 residues long: Succinyl-diaminopimelate desuccinylase (383 aa).

H79 is a Zn(2+) binding site. D81 is an active-site residue. Residue D110 coordinates Zn(2+). E141 (proton acceptor) is an active-site residue. Zn(2+) contacts are provided by E142, E170, and H355.

The protein belongs to the peptidase M20A family. DapE subfamily. Homodimer. It depends on Zn(2+) as a cofactor. Requires Co(2+) as cofactor.

It carries out the reaction N-succinyl-(2S,6S)-2,6-diaminopimelate + H2O = (2S,6S)-2,6-diaminopimelate + succinate. Its pathway is amino-acid biosynthesis; L-lysine biosynthesis via DAP pathway; LL-2,6-diaminopimelate from (S)-tetrahydrodipicolinate (succinylase route): step 3/3. Catalyzes the hydrolysis of N-succinyl-L,L-diaminopimelic acid (SDAP), forming succinate and LL-2,6-diaminopimelate (DAP), an intermediate involved in the bacterial biosynthesis of lysine and meso-diaminopimelic acid, an essential component of bacterial cell walls. This chain is Succinyl-diaminopimelate desuccinylase, found in Helicobacter pylori (strain Shi470).